Here is an 87-residue protein sequence, read N- to C-terminus: Large ribosomal subunit protein bL27 (87 aa).

The disordered stretch occupies residues 1 to 21 (MAHKKGQGSTQNNRDSAGRRL).

It belongs to the bacterial ribosomal protein bL27 family.

This chain is Large ribosomal subunit protein bL27, found in Nautilia profundicola (strain ATCC BAA-1463 / DSM 18972 / AmH).